A 158-amino-acid chain; its full sequence is Transcription elongation factor GreA (158 aa).

Residues 47–74 are a coiled coil; that stretch reads AEYHAAKEEQSHNEGRINELEDKLARAD.

It belongs to the GreA/GreB family.

In terms of biological role, necessary for efficient RNA polymerase transcription elongation past template-encoded arresting sites. The arresting sites in DNA have the property of trapping a certain fraction of elongating RNA polymerases that pass through, resulting in locked ternary complexes. Cleavage of the nascent transcript by cleavage factors such as GreA or GreB allows the resumption of elongation from the new 3'terminus. GreA releases sequences of 2 to 3 nucleotides. This chain is Transcription elongation factor GreA, found in Rhodopseudomonas palustris (strain ATCC BAA-98 / CGA009).